The chain runs to 147 residues: Anti-sigma F factor (147 aa).

The protein belongs to the anti-sigma-factor family.

The catalysed reaction is L-seryl-[protein] + ATP = O-phospho-L-seryl-[protein] + ADP + H(+). It carries out the reaction L-threonyl-[protein] + ATP = O-phospho-L-threonyl-[protein] + ADP + H(+). Its function is as follows. Binds to sigma F and blocks its ability to form an RNA polymerase holoenzyme (E-sigma F). Phosphorylates SpoIIAA on a serine residue. This phosphorylation may enable SpoIIAA to act as an anti-anti-sigma factor that counteracts SpoIIAB and thus releases sigma F from inhibition. The chain is Anti-sigma F factor from Priestia megaterium (Bacillus megaterium).